Here is a 366-residue protein sequence, read N- to C-terminus: Type 2 DNA topoisomerase 6 subunit A (366 aa).

The region spanning 7 to 146 (SDETEARDQL…FHMRPEESGA (140 aa)) is the Topo IIA-type catalytic domain. The O-(5'-phospho-DNA)-tyrosine intermediate role is filled by Y101. Positions 199 and 251 each coordinate Mg(2+).

Belongs to the TOP6A family. As to quaternary structure, homodimer. Heterotetramer of two Top6A and two Top6B chains. It depends on Mg(2+) as a cofactor.

It catalyses the reaction ATP-dependent breakage, passage and rejoining of double-stranded DNA.. Its function is as follows. Relaxes both positive and negative superturns and exhibits a strong decatenase activity. In Halobacterium salinarum (strain ATCC 700922 / JCM 11081 / NRC-1) (Halobacterium halobium), this protein is Type 2 DNA topoisomerase 6 subunit A.